A 975-amino-acid polypeptide reads, in one-letter code: DNA primase (975 aa).

A CHC2-type zinc finger spans residues 919 to 958 (CIQHDHRDGRENVQFFLDFRPESATTIWTTLWSRCFSRKC).

This sequence belongs to the herpesviridae DNA primase family. In terms of assembly, associates with the helicase and the primase-associated factor to form the helicase-primase factor.

The protein resides in the host nucleus. In terms of biological role, essential component of the helicase/primase complex. Unwinds the DNA at the replication forks and generates single-stranded DNA for both leading and lagging strand synthesis. The primase initiates primer synthesis and thereby produces large amount of short RNA primers on the lagging strand that the polymerase elongates using dNTPs. This is DNA primase from Elephas maximus (Indian elephant).